A 212-amino-acid chain; its full sequence is Ribosomal RNA small subunit methyltransferase G (212 aa).

S-adenosyl-L-methionine-binding positions include G80, L85, 131-132, and R146; that span reads AE.

This sequence belongs to the methyltransferase superfamily. RNA methyltransferase RsmG family.

The protein resides in the cytoplasm. The enzyme catalyses guanosine(527) in 16S rRNA + S-adenosyl-L-methionine = N(7)-methylguanosine(527) in 16S rRNA + S-adenosyl-L-homocysteine. Functionally, specifically methylates the N7 position of guanine in position 527 of 16S rRNA. The sequence is that of Ribosomal RNA small subunit methyltransferase G from Xanthomonas oryzae pv. oryzae (strain KACC10331 / KXO85).